The sequence spans 253 residues: Triosephosphate isomerase (253 aa).

A substrate-binding site is contributed by 9 to 11 (NWK). His95 (electrophile) is an active-site residue. Residue Glu167 is the Proton acceptor of the active site. Residues Gly173, Ser213, and 234–235 (GG) contribute to the substrate site. Position 213 is a phosphoserine (Ser213).

The protein belongs to the triosephosphate isomerase family. Homodimer.

It is found in the cytoplasm. The catalysed reaction is D-glyceraldehyde 3-phosphate = dihydroxyacetone phosphate. The protein operates within carbohydrate biosynthesis; gluconeogenesis. Its pathway is carbohydrate degradation; glycolysis; D-glyceraldehyde 3-phosphate from glycerone phosphate: step 1/1. Functionally, involved in the gluconeogenesis. Catalyzes stereospecifically the conversion of dihydroxyacetone phosphate (DHAP) to D-glyceraldehyde-3-phosphate (G3P). The polypeptide is Triosephosphate isomerase (Bacillus pumilus (strain SAFR-032)).